The following is a 349-amino-acid chain: Hydrophobic dipeptide epimerase (349 aa).

Residues Thr127 and 153-155 (KIK) contribute to the substrate site. Mg(2+) is bound by residues Asp186, Glu212, and Asp237. Substrate contacts are provided by residues Lys259 and 309-311 (DLD).

This sequence belongs to the mandelate racemase/muconate lactonizing enzyme family. Mg(2+) serves as cofactor.

In terms of biological role, catalyzes the epimerization a variety of hydrophobic dipeptides. Epimerase activity is highest with L-Ala-L-Tyr, and lower with L-Ala-L-Met, L-Ala-L-Phe, L-Tyr-L-Ala, L-Tyr-L-Met and L-Tyr-L-Trp (in vitro). This is Hydrophobic dipeptide epimerase from Flavobacteria bacterium (strain MS024-2A).